A 107-amino-acid polypeptide reads, in one-letter code: Iron-binding protein IscA (107 aa).

Residues Cys-35, Cys-99, and Cys-101 each contribute to the Fe cation site.

It belongs to the HesB/IscA family. In terms of assembly, homodimer; may form tetramers and higher multimers. The cofactor is Fe cation.

In terms of biological role, is able to transfer iron-sulfur clusters to apo-ferredoxin. Multiple cycles of [2Fe2S] cluster formation and transfer are observed, suggesting that IscA acts catalytically. Recruits intracellular free iron so as to provide iron for the assembly of transient iron-sulfur cluster in IscU in the presence of IscS, L-cysteine and the thioredoxin reductase system TrxA/TrxB. This Klebsiella pneumoniae subsp. pneumoniae (strain ATCC 700721 / MGH 78578) protein is Iron-binding protein IscA.